Consider the following 129-residue polypeptide: Iron-sulfur cluster assembly 1 homolog, mitochondrial (129 aa).

Residues 1–12 constitute a mitochondrion transit peptide; that stretch reads MSASLVRATVRA. The Fe cation site is built by cysteine 57, cysteine 121, and cysteine 123.

The protein belongs to the HesB/IscA family. Interacts with CRY2, but not with CRY1 (in vitro).

It is found in the mitochondrion. Functionally, involved in the maturation of mitochondrial 4Fe-4S proteins functioning late in the iron-sulfur cluster assembly pathway. Probably involved in the binding of an intermediate of Fe/S cluster assembly. This is Iron-sulfur cluster assembly 1 homolog, mitochondrial (Isca1) from Mus musculus (Mouse).